A 319-amino-acid chain; its full sequence is Cobalamin biosynthesis protein CobD (319 aa).

Transmembrane regions (helical) follow at residues 56–76 (VMWLVVIGLTWGVAWGVLALA), 78–98 (GIHPWLGWLVEVWMIFTALAG), 153–173 (VDGIIAPLFFLLLGGAPLAMA), 204–224 (VANFLPARLSWLLLSLAAVLC), and 296–316 (LMWVASSLALALFIGVRYWLV).

This sequence belongs to the CobD/CbiB family.

The protein localises to the cell membrane. The protein operates within cofactor biosynthesis; adenosylcobalamin biosynthesis. Its function is as follows. Converts cobyric acid to cobinamide by the addition of aminopropanol on the F carboxylic group. In Klebsiella pneumoniae subsp. pneumoniae (strain ATCC 700721 / MGH 78578), this protein is Cobalamin biosynthesis protein CobD.